A 405-amino-acid chain; its full sequence is Formin-like protein 15a (405 aa).

The segment at 1-31 is disordered; it reads MSLVEISGSDAMAAPMPGRVPPPPPRPPPMP. A compositionally biased stretch (pro residues) spans 18 to 31; it reads GRVPPPPPRPPPMP. One can recognise an FH2 domain in the interval 52-405; sequence FPRPAKKRAS…VCWFFVRLMI (354 aa).

It belongs to the formin-like family. Class-II subfamily.

This is Formin-like protein 15a (FH15A) from Arabidopsis thaliana (Mouse-ear cress).